Consider the following 56-residue polypeptide: Ferredoxin (56 aa).

2 4Fe-4S ferredoxin-type domains span residues A2 to D29 and D29 to E56. C9, C12, C15, C19, C38, C41, C44, and C48 together coordinate [4Fe-4S] cluster.

[4Fe-4S] cluster is required as a cofactor.

Ferredoxins are iron-sulfur proteins that transfer electrons in a wide variety of metabolic reactions. The sequence is that of Ferredoxin from Acetoanaerobium sticklandii (strain ATCC 12662 / DSM 519 / JCM 1433 / CCUG 9281 / NCIMB 10654 / HF) (Clostridium sticklandii).